The primary structure comprises 295 residues: Acetyl-coenzyme A carboxylase carboxyl transferase subunit beta (295 aa).

The interval 1–20 (MSWLSKLMPSGIRTENTPAK) is disordered. One can recognise a CoA carboxyltransferase N-terminal domain in the interval 28-295 (LWEKCSNCGS…QPHPQDADAA (268 aa)). Cys-32, Cys-35, Cys-51, and Cys-54 together coordinate Zn(2+). The segment at 32–54 (CSNCGSALYGPELEENLEVCPKC) adopts a C4-type zinc-finger fold.

This sequence belongs to the AccD/PCCB family. As to quaternary structure, acetyl-CoA carboxylase is a heterohexamer composed of biotin carboxyl carrier protein (AccB), biotin carboxylase (AccC) and two subunits each of ACCase subunit alpha (AccA) and ACCase subunit beta (AccD). Requires Zn(2+) as cofactor.

It is found in the cytoplasm. It catalyses the reaction N(6)-carboxybiotinyl-L-lysyl-[protein] + acetyl-CoA = N(6)-biotinyl-L-lysyl-[protein] + malonyl-CoA. It functions in the pathway lipid metabolism; malonyl-CoA biosynthesis; malonyl-CoA from acetyl-CoA: step 1/1. Functionally, component of the acetyl coenzyme A carboxylase (ACC) complex. Biotin carboxylase (BC) catalyzes the carboxylation of biotin on its carrier protein (BCCP) and then the CO(2) group is transferred by the transcarboxylase to acetyl-CoA to form malonyl-CoA. This chain is Acetyl-coenzyme A carboxylase carboxyl transferase subunit beta, found in Xanthomonas campestris pv. campestris (strain 8004).